Consider the following 633-residue polypeptide: Histone-lysine N-methyltransferase Su(var)3-9 (633 aa).

Residues 213–271 (YIVEKIESVEVVQFQPVFFVKWLGYDVSANTWESYVNLSDCAEMEKFVERHLQLHQHYI) form the Chromo domain. The region spanning 407-472 (VGCMCRHQSG…SCTNRVVQNG (66 aa)) is the Pre-SET domain. Residues Cys409, Cys411, Cys419, Cys425, Cys426, Cys454, Cys458, Cys460, and Cys464 each contribute to the Zn(2+) site. Residues 475 to 601 (HPLVLFKTSN…AGEELSFDYI (127 aa)) form the SET domain. S-adenosyl-L-methionine contacts are provided by residues 486 to 488 (SGW), Tyr529, and 558 to 559 (NH). Zn(2+) is bound by residues Cys561, Cys621, Cys623, and Cys628. The Post-SET domain occupies 617 to 633 (ARVQCRCGAANCRKVLF).

This sequence belongs to the class V-like SAM-binding methyltransferase superfamily. Histone-lysine methyltransferase family. Suvar3-9 subfamily. Interacts with Su(var)205 and Su(var)3-7. Probably associates with HDAC1/Rpd3.

It is found in the nucleus. Its subcellular location is the chromosome. It localises to the centromere. It carries out the reaction L-lysyl(9)-[histone H3] + 3 S-adenosyl-L-methionine = N(6),N(6),N(6)-trimethyl-L-lysyl(9)-[histone H3] + 3 S-adenosyl-L-homocysteine + 3 H(+). Its function is as follows. Histone methyltransferase that specifically trimethylates 'Lys-9' of histone H3 using monomethylated H3 'Lys-9' as substrate. H3 'Lys-9' trimethylation represents a specific tag for epigenetic transcriptional repression by recruiting Su(var)205/HP1 to methylated histones. Mainly functions in heterochromatin regions, thereby playing a central role in the establishment of constitutive heterochromatin at pericentric regions. Involved in heterochromatic gene silencing including the modification of position-effect-variegation. The sequence is that of Histone-lysine N-methyltransferase Su(var)3-9 (Su(var)3-9) from Drosophila pseudoobscura pseudoobscura (Fruit fly).